The chain runs to 62 residues: UPF0434 protein NGR_c31900 (62 aa).

Belongs to the UPF0434 family.

The protein is UPF0434 protein NGR_c31900 of Sinorhizobium fredii (strain NBRC 101917 / NGR234).